We begin with the raw amino-acid sequence, 804 residues long: Endoplasmin (804 aa).

Residues 1–21 form the signal peptide; sequence MRALWVLGLCCVLLTFGSVRA. The short motif at 42 to 44 is the SRT pseudosubstrate motif element; it reads SRT. The N-linked (GlcNAc...) asparagine glycan is linked to N62. Residue S64 is modified to Phosphoserine. N107 is a glycosylation site (N-linked (GlcNAc...) asparagine). The ATP site is built by N107, D149, and N162. K168 carries the post-translational modification N6-(2-hydroxyisobutyryl)lysine. S172 bears the Phosphoserine mark. ATP is bound at residue F199. A glycan (N-linked (GlcNAc...) asparagine) is linked at N217. Residues 288 to 323 are disordered; that stretch reads TVEEPMEEEEAAKEEKEESDDEAAVEEEEEEKKPKT. Positions 289 to 317 are enriched in acidic residues; sequence VEEPMEEEEAAKEEKEESDDEAAVEEEEE. 2 positions are modified to phosphoserine: S306 and S403. K404 carries the post-translational modification N6-succinyllysine. The N-linked (GlcNAc...) asparagine glycan is linked to N445. A Phosphoserine modification is found at S447. An N6-acetyllysine modification is found at K479. N481 and N502 each carry an N-linked (GlcNAc...) asparagine glycan. K633 is modified (N6-succinyllysine). The segment at 750–804 is disordered; that stretch reads DPDAKVEDEPEEEPEETTEDTTEDTEQDEDEEMDVGTDEEEQETAKESTAEKDEL. A compositionally biased stretch (acidic residues) spans 757 to 791; it reads DEPEEEPEETTEDTTEDTEQDEDEEMDVGTDEEEQ. T786 carries the post-translational modification Phosphothreonine. Over residues 792–804 the composition is skewed to basic and acidic residues; it reads ETAKESTAEKDEL. A Prevents secretion from ER motif is present at residues 801–804; it reads KDEL.

The protein belongs to the heat shock protein 90 family. Homodimer; disulfide-linked. Component of an EIF2 complex at least composed of CELF1/CUGBP1, CALR, CALR3, EIF2S1, EIF2S2, HSP90B1 and HSPA5. Part of a large chaperone multiprotein complex comprising DNAJB11, HSP90B1, HSPA5, HYOU, PDIA2, PDIA4, PDIA6, PPIB, SDF2L1, UGGT1 and very small amounts of ERP29, but not, or at very low levels, CALR nor CANX. Interacts with AIMP1; regulates its retention in the endoplasmic reticulum. Hyperglycosylated form interacts with OS9; promoting its degradation by the endoplasmic reticulum associated degradation (ERAD). Interacts with CNPY3. This interaction is disrupted in the presence of ATP. Interacts with TLR4 and TLR9, but not with TLR3. Interacts with MZB1 in a calcium-dependent manner. Interacts with METTL23. Interacts with IL1B; the interaction facilitates cargo translocation into the ERGIC. Interacts with EIF2AK3. Post-translationally, phosphorylated by CK2. In terms of processing, N-glycosylated cotranslationally at Asn-217 by STT3A-containing OST-A complex: this glycosylation is constitutive. In response to various stress, 5 additional facultative sites (Asn-62, Asn-107, Asn-445, Asn-481 and Asn-502) can be glycosylated post-translationally by STT3B-containing OST-B complex, leading to a hyperglycosylated form that is degraded by the ER-associated degradation (ERAD) pathway. In normal conditions, the OST-A complex together with CCDC134 prevent glycosylation at facultative sites during protein folding, thereby preventing hyperglycosylation. Mechanistically, nascent HSP90B1 is tethered during translation to a specialized CCDC134-containing translocon that forms a microenvironment for its folding, in which STT3A associates with the SRT pseudosubstrate motif, and prevents access to facultative glycosylation sites until folding is completed, rendering its facultative sites inaccessible to the OST-B complex.

It localises to the endoplasmic reticulum lumen. The protein resides in the sarcoplasmic reticulum lumen. It is found in the melanosome. It carries out the reaction ATP + H2O = ADP + phosphate + H(+). ATP-dependent chaperone involved in the processing of proteins in the endoplasmic reticulum, regulating their transport. Together with MESD, acts as a modulator of the Wnt pathway by promoting the folding of LRP6, a coreceptor of the canonical Wnt pathway. When associated with CNPY3, required for proper folding of Toll-like receptors. Promotes folding and trafficking of TLR4 to the cell surface. May participate in the unfolding of cytosolic leaderless cargos (lacking the secretion signal sequence) such as the interleukin 1/IL-1 to facilitate their translocation into the ERGIC (endoplasmic reticulum-Golgi intermediate compartment) and secretion; the translocation process is mediated by the cargo receptor TMED10. The polypeptide is Endoplasmin (HSP90B1) (Macaca fascicularis (Crab-eating macaque)).